Consider the following 263-residue polypeptide: Aminoglycoside 3'-phosphotransferase (263 aa).

The Proton acceptor role is filled by D189.

Belongs to the aminoglycoside phosphotransferase family.

It carries out the reaction kanamycin A + ATP = kanamycin 3'-phosphate + ADP + H(+). In terms of biological role, resistance to kanamycin and structurally-related aminoglycosides, including amikacin. The polypeptide is Aminoglycoside 3'-phosphotransferase (aphA) (Staphylococcus aureus).